Consider the following 301-residue polypeptide: Nucleotide-binding protein MAB_2783c (301 aa).

24-31 (GLSGAGRG) contacts ATP. 75–78 (DVRS) is a binding site for GTP.

It belongs to the RapZ-like family.

In terms of biological role, displays ATPase and GTPase activities. This chain is Nucleotide-binding protein MAB_2783c, found in Mycobacteroides abscessus (strain ATCC 19977 / DSM 44196 / CCUG 20993 / CIP 104536 / JCM 13569 / NCTC 13031 / TMC 1543 / L948) (Mycobacterium abscessus).